Consider the following 85-residue polypeptide: uncharacterized protein (85 aa).

2 disordered regions span residues 1-22 and 41-85; these read MFAPPSSLFVPATAPAPSTSGF and EKER…SFLR. Residues 75–85 show a composition bias toward polar residues; sequence FPSNYRGSFLR.

This is an uncharacterized protein from Dryophytes versicolor (chameleon treefrog).